A 249-amino-acid polypeptide reads, in one-letter code: Tryptophan synthase alpha chain (249 aa).

Residues Glu43 and Asp54 each act as proton acceptor in the active site.

It belongs to the TrpA family. Tetramer of two alpha and two beta chains.

The catalysed reaction is (1S,2R)-1-C-(indol-3-yl)glycerol 3-phosphate + L-serine = D-glyceraldehyde 3-phosphate + L-tryptophan + H2O. Its pathway is amino-acid biosynthesis; L-tryptophan biosynthesis; L-tryptophan from chorismate: step 5/5. The alpha subunit is responsible for the aldol cleavage of indoleglycerol phosphate to indole and glyceraldehyde 3-phosphate. In Campylobacter jejuni subsp. jejuni serotype O:23/36 (strain 81-176), this protein is Tryptophan synthase alpha chain.